We begin with the raw amino-acid sequence, 948 residues long: Isoleucine--tRNA ligase (948 aa).

Residues 58-68 carry the 'HIGH' region motif; sequence PYANGDIHIGH. Glutamate 566 contributes to the L-isoleucyl-5'-AMP binding site. A 'KMSKS' region motif is present at residues 607 to 611; sequence KMSKS. Position 610 (lysine 610) interacts with ATP. Residues cysteine 911, cysteine 914, cysteine 931, and cysteine 934 each coordinate Zn(2+).

It belongs to the class-I aminoacyl-tRNA synthetase family. IleS type 1 subfamily. In terms of assembly, monomer. It depends on Zn(2+) as a cofactor.

It localises to the cytoplasm. The catalysed reaction is tRNA(Ile) + L-isoleucine + ATP = L-isoleucyl-tRNA(Ile) + AMP + diphosphate. In terms of biological role, catalyzes the attachment of isoleucine to tRNA(Ile). As IleRS can inadvertently accommodate and process structurally similar amino acids such as valine, to avoid such errors it has two additional distinct tRNA(Ile)-dependent editing activities. One activity is designated as 'pretransfer' editing and involves the hydrolysis of activated Val-AMP. The other activity is designated 'posttransfer' editing and involves deacylation of mischarged Val-tRNA(Ile). This Vibrio vulnificus (strain YJ016) protein is Isoleucine--tRNA ligase.